The sequence spans 189 residues: Protein Rex (189 aa).

A compositionally biased stretch (basic residues) spans 1–16; it reads MPKTRRRPRRSQRKRP. Residues 1–27 are disordered; it reads MPKTRRRPRRSQRKRPPTPWPTSQGLD. A Nuclear localization signal, and RNA-binding (RxRE) motif is present at residues 2 to 18; it reads PKTRRRPRRSQRKRPPT. A homomultimerization region spans residues 56–70; sequence RPAYIVTPYWPPVQS. Position 70 is a phosphoserine; by host (S70). Residues 73 to 189 form a disordered region; that stretch reads SPGTPSMDAL…PPSPGPSCPT (117 aa). Low complexity predominate over residues 80–94; that stretch reads DALSAQLYSSLSLDS. The Nuclear export signal motif lies at 82–93; sequence LSAQLYSSLSLD. Residues 123–131 form a homomultimerization region; it reads PSSRPCANT. The span at 143–164 shows a compositional bias: polar residues; it reads LGSTSQPCLFQTPDSGPKTCTP. A Phosphothreonine; by host modification is found at T174. S177 carries the phosphoserine; by host modification. Positions 178–189 are enriched in pro residues; it reads FPPPSPGPSCPT.

The protein belongs to the deltaretrovirus Rex protein family. As to quaternary structure, homomultimer. Multimeric assembly is essential for activity and involves XPO1. Binds to human XPO1 and KPNB1. Interacts (via N-terminal nuclear localization signal) with human NPM1.

The protein localises to the host nucleus. It is found in the host nucleolus. Its subcellular location is the host cytoplasm. Its function is as follows. Rex escorts unspliced gag-pro-pol and singly spliced env mRNAs out of the nucleus of infected cells. These mRNAs carry a recognition sequence called Rex responsive element (RxRE or XRE) located at the 3' region of the long terminal repeat (LTR). This function is essential since most HTLV proteins are translated from unspliced or partially spliced pre-mRNAs that cannot exit the nucleus by the pathway used by fully processed cellular mRNAs. Rex itself is translated from a fully spliced mRNA that probably readily exits the nucleus. Rex's nuclear localization signal (NLS) binds directly to KPNB1/importin beta-1 without previous binding to KPNA1/importin alpha-1. KPNB1 binds to the GDP bound form of RAN (Ran-GDP) and targets Rex to the nucleus. In the nucleus, the conversion from Ran-GDP to Ran-GTP dissociates Rex from KPNB1 and allows Rex's binding to the RRE in viral pre-mRNAs. Rex multimerizes on the RRE via cooperative assembly. This multimerization is critical for its full biological activity, since it may shield the viral RNA from being spliced or down-regulated, and probably exposes Rex's nuclear export signal (NES) to the surface. Rex can then form a complex with XPO1/CRM1, RANBP3 and Ran-GTP, leading to nuclear export of the complex. Conversion from Ran-GTP to Ran-GDP mediates dissociation of the Rex/RRE/XPO1/RANBP3/RAN complex, so that Rex can return to the nucleus for a subsequent round of export. In Human T-cell leukemia virus 1 (strain Japan ATK-1 subtype A) (HTLV-1), this protein is Protein Rex.